Here is a 284-residue protein sequence, read N- to C-terminus: uncharacterized protein (284 aa).

Over 1-8 (MLWKVSKM) the chain is Cytoplasmic. The helical transmembrane segment at 9–25 (FLGGLVALTTISVATLY) threads the bilayer. At 26–80 (HYQNRLVYPSWAQGARNHVDTPDSRGIPYEKLTLITQDHIKLEAWDIKNENSTST) the chain is on the extracellular side. Residues 81 to 101 (VLILCPNAGNIGYFILIIDIF) traverse the membrane as a helical segment. Over 102–284 (YRQFGMSVFI…RDFLIEKGFI (183 aa)) the chain is Cytoplasmic.

It to S.pombe bem46 and M.tuberculosis Rv2307c.

It is found in the mitochondrion membrane. This is an uncharacterized protein from Saccharomyces cerevisiae (strain ATCC 204508 / S288c) (Baker's yeast).